The sequence spans 427 residues: Enolase (427 aa).

Residue Q163 participates in (2R)-2-phosphoglycerate binding. E205 functions as the Proton donor in the catalytic mechanism. D242, E285, and D312 together coordinate Mg(2+). The (2R)-2-phosphoglycerate site is built by K337, R366, S367, and K388. The active-site Proton acceptor is K337.

This sequence belongs to the enolase family. It depends on Mg(2+) as a cofactor.

It localises to the cytoplasm. It is found in the secreted. The protein localises to the cell surface. The catalysed reaction is (2R)-2-phosphoglycerate = phosphoenolpyruvate + H2O. Its pathway is carbohydrate degradation; glycolysis; pyruvate from D-glyceraldehyde 3-phosphate: step 4/5. Its function is as follows. Catalyzes the reversible conversion of 2-phosphoglycerate (2-PG) into phosphoenolpyruvate (PEP). It is essential for the degradation of carbohydrates via glycolysis. The polypeptide is Enolase (Leptothrix cholodnii (strain ATCC 51168 / LMG 8142 / SP-6) (Leptothrix discophora (strain SP-6))).